Here is a 185-residue protein sequence, read N- to C-terminus: Transmembrane protein 252 (185 aa).

2 helical membrane passes run 8–28 (VLCALSLLTGFLMICLGGFFI) and 39–59 (LVVAYVLLPLGFVILLSGIFW). The interval 125–149 (YTETSLEPQDKDKNDPQPEAPPPYP) is disordered.

Its subcellular location is the membrane. The sequence is that of Transmembrane protein 252 (Tmem252) from Rattus norvegicus (Rat).